Consider the following 454-residue polypeptide: Metalloprotease MTH_856 (454 aa).

Residues 92 to 115 (QVGSGAPSVDKTMVRSSRPPSDVP) are disordered.

Belongs to the peptidase U62 family.

In terms of biological role, probable metalloprotease. In Methanothermobacter thermautotrophicus (strain ATCC 29096 / DSM 1053 / JCM 10044 / NBRC 100330 / Delta H) (Methanobacterium thermoautotrophicum), this protein is Metalloprotease MTH_856.